Here is a 343-residue protein sequence, read N- to C-terminus: Ribosomal RNA small subunit methyltransferase C (343 aa).

Belongs to the methyltransferase superfamily. RsmC family. Monomer.

Its subcellular location is the cytoplasm. It catalyses the reaction guanosine(1207) in 16S rRNA + S-adenosyl-L-methionine = N(2)-methylguanosine(1207) in 16S rRNA + S-adenosyl-L-homocysteine + H(+). Its function is as follows. Specifically methylates the guanine in position 1207 of 16S rRNA in the 30S particle. This is Ribosomal RNA small subunit methyltransferase C from Shigella sonnei (strain Ss046).